We begin with the raw amino-acid sequence, 341 residues long: Aromatic amino acid aminotransferase (341 aa).

Residue lysine 213 is modified to N6-(pyridoxal phosphate)lysine.

The protein belongs to the class-II pyridoxal-phosphate-dependent aminotransferase family. Homodimer. Requires pyridoxal 5'-phosphate as cofactor.

The catalysed reaction is an aromatic L-alpha-amino acid + 2-oxoglutarate = an aromatic oxo-acid + L-glutamate. Its function is as follows. Aminotransferase that catalyzes the conversion of aromatic amino acids and 2-oxoglutarate into corresponding aromatic oxo acids and L-glutamate. In Corynebacterium glutamicum (strain R), this protein is Aromatic amino acid aminotransferase.